A 241-amino-acid polypeptide reads, in one-letter code: Small ribosomal subunit protein uS2 (241 aa).

Belongs to the universal ribosomal protein uS2 family.

The sequence is that of Small ribosomal subunit protein uS2 from Escherichia coli O127:H6 (strain E2348/69 / EPEC).